Here is a 133-residue protein sequence, read N- to C-terminus: Covalently-linked cell wall protein 12 (133 aa).

A signal peptide spans 1-18 (MQFSTVASIAAVAAVASA). Asparagine 21 carries an N-linked (GlcNAc...) asparagine glycan. O-linked (Man) threonine glycans are attached at residues threonine 23, threonine 24, and threonine 26. O-linked (Man) serine glycosylation is found at serine 28 and serine 31. Residues threonine 32, threonine 33, threonine 36, and threonine 38 are each glycosylated (O-linked (Man) threonine). Residues serine 39 and serine 46 are each glycosylated (O-linked (Man) serine). Threonine 48 carries O-linked (Man) threonine glycosylation. A run of 2 repeats spans residues 75-88 (TTEA…TAAP) and 91-103 (STEA…SAAP). A disordered region spans residues 79-104 (PKNGTSTAAPVTSTEAPKNTTSAAPT). Lysine 80 is covalently cross-linked (Glycyl lysine isopeptide (Lys-Gly) (interchain with G-Cter in ubiquitin)). 2 N-linked (GlcNAc...) asparagine glycosylation sites follow: asparagine 81 and asparagine 97. Positions 81 to 104 (NGTSTAAPVTSTEAPKNTTSAAPT) are enriched in polar residues. Glycine 112 carries the GPI-anchor amidated glycine lipid modification. Positions 113-133 (AAAKALPAAGALLAGAAALLL) are cleaved as a propeptide — removed in mature form.

It to yeast protein YDR134C. Post-translationally, extensively O-glycosylated; glycans consist probably of single mannose residues. N-glycosylated. In terms of processing, the GPI-anchor is attached to the protein in the endoplasmic reticulum and serves to target the protein to the cell surface. There, the glucosamine-inositol phospholipid moiety is cleaved off and the GPI-modified mannoprotein is covalently attached via its lipidless GPI glycan remnant to the 1,6-beta-glucan of the outer cell wall layer.

It localises to the secreted. The protein resides in the cell wall. The protein localises to the membrane. Functionally, component of the cell wall. May play a role in the formation of a tightly packed outer mannan layer, which protects the inner glucan. This Saccharomyces cerevisiae (strain ATCC 204508 / S288c) (Baker's yeast) protein is Covalently-linked cell wall protein 12 (CCW12).